Reading from the N-terminus, the 227-residue chain is Transmembrane emp24 domain-containing protein 1 (227 aa).

The first 23 residues, 1-23, serve as a signal peptide directing secretion; that stretch reads MMAAGTALGLALWLLLPPVGVGG. The Extracellular portion of the chain corresponds to 24–194; it reads AGPPPIQDGE…LQEGNLERVN (171 aa). The 83-residue stretch at 43–125 folds into the GOLD domain; that stretch reads KQCFYQSAPA…EKLVFFELIF (83 aa). Residues 145 to 170 adopt a coiled-coil conformation; the sequence is EILEVKMEDIKESIETMRIRLERSIQ. The helical transmembrane segment at 195–215 threads the bilayer; the sequence is FWSAVNVAVLLLVAVLQVCTL. Topologically, residues 216–227 are cytoplasmic; the sequence is KRFFQDKRPVPM. The COPII vesicle coat-binding signature appears at 218 to 219; sequence FF. Residues 218–227 carry the COPI vesicle coat-binding motif; the sequence is FFQDKRPVPM.

This sequence belongs to the EMP24/GP25L family. In terms of assembly, homodimer in endoplasmic reticulum, endoplasmic reticulum-Golgi intermediate compartment and cis-Golgi network. Interacts with IL1RL1. Interacts with RNF26; this interaction is important to modulate innate immune signaling through the cGAS-STING pathway.

It is found in the cell membrane. The protein localises to the endoplasmic reticulum membrane. The protein resides in the golgi apparatus. Its subcellular location is the cis-Golgi network membrane. It localises to the endoplasmic reticulum-Golgi intermediate compartment membrane. Potential role in vesicular protein trafficking, mainly in the early secretory pathway. May act as a cargo receptor at the lumenal side for incorporation of secretory cargo molecules into transport vesicles and may be involved in vesicle coat formation at the cytoplasmic side. Plays a positive role in IL-33-mediated IL-8 and IL-6 production by interacting with interleukin-33 receptor IL1RL1. Plays also a role in the modulation of innate immune signaling through the cGAS-STING pathway by interacting with RNF26. This Bos taurus (Bovine) protein is Transmembrane emp24 domain-containing protein 1 (TMED1).